The primary structure comprises 290 residues: MQPISWRERLQAYYYLCRFDKPIGTELVFWPTMWALWIASDGYPDLKMFVVMTLGVLFMRAAGCAINDFADRKVDGHVARTKQRPLATGIIRPIEAIWVFLALVAASAALLLFLPIETFYWSFGALFLAFIYPFMKRYTHLPQVFLGAAFSWAIPMAYTATGQAPDLTCWLLYFGNLAWTVAYDTQYAITDREYDLKIGVKSTAILFNRFDIPIISTLQLSSLLLIGMALYIENLLFPWGIIGLVVVAVDFIYQWTKTKNRDPQLCFWAFRHNRWVGLIIFLAILAAFRF.

Helical transmembrane passes span 23-43, 46-66, 96-116, 118-138, 141-161, 169-189, 212-232, 235-255, and 265-285; these read IGTE…SDGY, LKMF…GCAI, AIWV…FLPI, TFYW…MKRY, LPQV…YTAT, CWLL…QYAI, IPII…ALYI, LLFP…IYQW, and LCFW…LAIL.

It belongs to the UbiA prenyltransferase family. It depends on Mg(2+) as a cofactor.

It is found in the cell inner membrane. The enzyme catalyses all-trans-octaprenyl diphosphate + 4-hydroxybenzoate = 4-hydroxy-3-(all-trans-octaprenyl)benzoate + diphosphate. Its pathway is cofactor biosynthesis; ubiquinone biosynthesis. Catalyzes the prenylation of para-hydroxybenzoate (PHB) with an all-trans polyprenyl group. Mediates the second step in the final reaction sequence of ubiquinone-8 (UQ-8) biosynthesis, which is the condensation of the polyisoprenoid side chain with PHB, generating the first membrane-bound Q intermediate 3-octaprenyl-4-hydroxybenzoate. This is 4-hydroxybenzoate octaprenyltransferase from Acinetobacter baylyi (strain ATCC 33305 / BD413 / ADP1).